A 320-amino-acid polypeptide reads, in one-letter code: MQYQTHWIEHSVVKILSTTGKNHIALVAGGMSAEREVSLVSSEGVQQALIALGYKVTFIDMGADIAVKLQEIKPDIVFNCLHGTYGEDGCLPGLLNIMRIPYTHSGVLSSALAFNKIHSSSWFFANSINTAESIVVSKSYNINTDPMKRPYVIKPLTQGSSIGVEVIFEEDDFNFADYDFPYGDQVVIERYIKGREFQVAVLNSKALGALEIKLIKNRFYDYETKYTEGFAEHLCPAPLHANLYEKLLIESEKIYKTMNCKGPARAEFILEEQTNKLYALEINTHPGMTPLSIVPEIAAYAGINFTNLIAEIIKTASFES.

The ATP-grasp domain maps to 120–314; that stretch reads SSWFFANSIN…FTNLIAEIIK (195 aa). 147–198 is a binding site for ATP; the sequence is MKRPYVIKPLTQGSSIGVEVIFEEDDFNFADYDFPYGDQVVIERYIKGREFQ. Glutamate 267, glutamate 281, and asparagine 283 together coordinate Mg(2+).

It belongs to the D-alanine--D-alanine ligase family. It depends on Mg(2+) as a cofactor. Requires Mn(2+) as cofactor.

The protein localises to the cytoplasm. It catalyses the reaction 2 D-alanine + ATP = D-alanyl-D-alanine + ADP + phosphate + H(+). Its pathway is cell wall biogenesis; peptidoglycan biosynthesis. Functionally, cell wall formation. This Rickettsia akari (strain Hartford) protein is D-alanine--D-alanine ligase.